The following is a 257-amino-acid chain: Indole-3-glycerol phosphate synthase (257 aa).

The protein belongs to the TrpC family.

The catalysed reaction is 1-(2-carboxyphenylamino)-1-deoxy-D-ribulose 5-phosphate + H(+) = (1S,2R)-1-C-(indol-3-yl)glycerol 3-phosphate + CO2 + H2O. It functions in the pathway amino-acid biosynthesis; L-tryptophan biosynthesis; L-tryptophan from chorismate: step 4/5. This is Indole-3-glycerol phosphate synthase from Halalkalibacterium halodurans (strain ATCC BAA-125 / DSM 18197 / FERM 7344 / JCM 9153 / C-125) (Bacillus halodurans).